Reading from the N-terminus, the 257-residue chain is Thiazole synthase (257 aa).

Lys-98 acts as the Schiff-base intermediate with DXP in catalysis. 1-deoxy-D-xylulose 5-phosphate is bound by residues Gly-159, 185–186, and 207–208; these read AG and NT.

Belongs to the ThiG family. In terms of assembly, homotetramer. Forms heterodimers with either ThiH or ThiS.

The protein resides in the cytoplasm. The enzyme catalyses [ThiS sulfur-carrier protein]-C-terminal-Gly-aminoethanethioate + 2-iminoacetate + 1-deoxy-D-xylulose 5-phosphate = [ThiS sulfur-carrier protein]-C-terminal Gly-Gly + 2-[(2R,5Z)-2-carboxy-4-methylthiazol-5(2H)-ylidene]ethyl phosphate + 2 H2O + H(+). It participates in cofactor biosynthesis; thiamine diphosphate biosynthesis. Functionally, catalyzes the rearrangement of 1-deoxy-D-xylulose 5-phosphate (DXP) to produce the thiazole phosphate moiety of thiamine. Sulfur is provided by the thiocarboxylate moiety of the carrier protein ThiS. In vitro, sulfur can be provided by H(2)S. This chain is Thiazole synthase, found in Anaeromyxobacter sp. (strain Fw109-5).